A 251-amino-acid chain; its full sequence is uncharacterized protein (251 aa).

6 residues coordinate a divalent metal cation: His5, His7, Glu101, His132, His163, and Asp209.

Belongs to the metallo-dependent hydrolases superfamily. TatD-type hydrolase family. A divalent metal cation serves as cofactor.

This is an uncharacterized protein from Methanocaldococcus jannaschii (strain ATCC 43067 / DSM 2661 / JAL-1 / JCM 10045 / NBRC 100440) (Methanococcus jannaschii).